The sequence spans 307 residues: Bifunctional protein FolD 3 (307 aa).

Residues 169 to 171 (GRS), S194, and I235 contribute to the NADP(+) site.

The protein belongs to the tetrahydrofolate dehydrogenase/cyclohydrolase family. In terms of assembly, homodimer.

The catalysed reaction is (6R)-5,10-methylene-5,6,7,8-tetrahydrofolate + NADP(+) = (6R)-5,10-methenyltetrahydrofolate + NADPH. It catalyses the reaction (6R)-5,10-methenyltetrahydrofolate + H2O = (6R)-10-formyltetrahydrofolate + H(+). The protein operates within one-carbon metabolism; tetrahydrofolate interconversion. Catalyzes the oxidation of 5,10-methylenetetrahydrofolate to 5,10-methenyltetrahydrofolate and then the hydrolysis of 5,10-methenyltetrahydrofolate to 10-formyltetrahydrofolate. This chain is Bifunctional protein FolD 3, found in Ectopseudomonas mendocina (strain ymp) (Pseudomonas mendocina).